Here is a 515-residue protein sequence, read N- to C-terminus: Sugar transport protein MST4 (515 aa).

Residues 1 to 17 lie on the Cytoplasmic side of the membrane; the sequence is MAGGFSVSGSGVEFEAK. Residues 18-38 traverse the membrane as a helical segment; it reads ITPIVIISCIMAATGGLMFGY. Topologically, residues 39-78 are extracellular; sequence DVGISGGVTSMDDFLREFFPTVLKKKHEDKESNYCKYDNQ. The chain crosses the membrane as a helical span at residues 79-99; sequence GLQLFTSSLYLAGLTATFFAS. Residues 100–108 lie on the Cytoplasmic side of the membrane; the sequence is YTTRRLGRR. Residues 109 to 129 traverse the membrane as a helical segment; the sequence is LTMLIAGVFFIVGVIFNGAAQ. Topologically, residues 130-138 are extracellular; sequence NLAMLIVGR. A helical transmembrane segment spans residues 139–159; it reads ILLGCGVGFANQAVPLFLSEI. Topologically, residues 160-165 are cytoplasmic; sequence APTRIR. A helical transmembrane segment spans residues 166-186; that stretch reads GGLNILFQLNVTIGILFANLV. The Extracellular portion of the chain corresponds to 187–199; the sequence is NYGTAKIHPWGWR. Residues 200–220 form a helical membrane-spanning segment; that stretch reads LSLSLAGIPAALLTLGALFVV. The Cytoplasmic portion of the chain corresponds to 221 to 280; that stretch reads DTPNSLIERGRLEEGKAVLRKIRGTDNVEPEFNEIVEASRVAQEVKHPFRNLLQRRNRPQ. The helical transmembrane segment at 281-301 threads the bilayer; that stretch reads LVIAVLLQIFQQFTGINAIMF. Topologically, residues 302 to 315 are extracellular; the sequence is YAPVLFNTLGFKTD. Residues 316 to 336 traverse the membrane as a helical segment; it reads ASLYSAVITGAVNVLSTLVSV. Over 337-347 the chain is Cytoplasmic; it reads YSVDRVGRRML. A helical transmembrane segment spans residues 348 to 368; the sequence is LLEAGVQMFLSQVAIAVVLGI. Over 369–379 the chain is Extracellular; the sequence is KVTDRSDNLGH. Residues 380-400 traverse the membrane as a helical segment; that stretch reads GWAIMVVVMVCTFVSSFAWSW. Residues 401–422 are Cytoplasmic-facing; the sequence is GPLGWLIPSETFPLETRSAGQS. A helical membrane pass occupies residues 423 to 443; it reads VTVCVNLLFTFVIAQAFLSML. Residues 444–448 are Extracellular-facing; the sequence is CHLKY. Residues 449-469 traverse the membrane as a helical segment; the sequence is AIFAFFSAWVVVMSLFVLFFL. The Cytoplasmic portion of the chain corresponds to 470–515; sequence PETKNIPIEEMTERVWKQHWFWKRFMDDADKHHVVPNGGKSNGATV.

It belongs to the major facilitator superfamily. Sugar transporter (TC 2.A.1.1) family. Expressed in roots, shoots, leaf blades, leaf sheaths, anthers, ovaries and embryos.

It localises to the membrane. Mediates active uptake of hexoses by sugar:proton symport. Can transport glucose, fructose, mannose and galactose. Can transport xylose and ribose. In Oryza sativa subsp. japonica (Rice), this protein is Sugar transport protein MST4.